Here is a 276-residue protein sequence, read N- to C-terminus: Diaminopimelate epimerase (276 aa).

Substrate is bound by residues N13, Q46, and N66. Residue C75 is the Proton donor of the active site. Residues 76 to 77 (GN), N159, N192, and 210 to 211 (ER) contribute to the substrate site. C219 functions as the Proton acceptor in the catalytic mechanism. A substrate-binding site is contributed by 220-221 (GT).

This sequence belongs to the diaminopimelate epimerase family. In terms of assembly, homodimer.

Its subcellular location is the cytoplasm. The catalysed reaction is (2S,6S)-2,6-diaminopimelate = meso-2,6-diaminopimelate. The protein operates within amino-acid biosynthesis; L-lysine biosynthesis via DAP pathway; DL-2,6-diaminopimelate from LL-2,6-diaminopimelate: step 1/1. Its function is as follows. Catalyzes the stereoinversion of LL-2,6-diaminopimelate (L,L-DAP) to meso-diaminopimelate (meso-DAP), a precursor of L-lysine and an essential component of the bacterial peptidoglycan. In Pseudomonas fluorescens (strain Pf0-1), this protein is Diaminopimelate epimerase.